Reading from the N-terminus, the 259-residue chain is DNA utilization protein HofM (259 aa).

In terms of biological role, required for the use of extracellular DNA as a nutrient. The protein is DNA utilization protein HofM (hofM) of Escherichia coli (strain K12).